A 79-amino-acid polypeptide reads, in one-letter code: Cytoinsectotoxin-3 (79 aa).

This sequence belongs to the cationic peptide 06 (cytoinsectotoxin) family. In terms of tissue distribution, expressed by the venom gland.

It is found in the secreted. Its function is as follows. Insecticidal and antimicrobial peptide. Has insecticidal activity against larvae of flesh fly S.carnaria. Has antibacterial activity against Gram-positive bacterium B.subtilis B-501 (MIC=0.63 uM) and Gram-negative bacterium E.coli DH5alpha (MIC=2.5 uM). This chain is Cytoinsectotoxin-3, found in Lachesana tarabaevi (Spider).